The following is a 396-amino-acid chain: NADH-quinone oxidoreductase subunit D (396 aa).

The protein belongs to the complex I 49 kDa subunit family. In terms of assembly, NDH-1 is composed of 14 different subunits. Subunits NuoB, C, D, E, F, and G constitute the peripheral sector of the complex.

It is found in the cell inner membrane. The catalysed reaction is a quinone + NADH + 5 H(+)(in) = a quinol + NAD(+) + 4 H(+)(out). Its function is as follows. NDH-1 shuttles electrons from NADH, via FMN and iron-sulfur (Fe-S) centers, to quinones in the respiratory chain. The immediate electron acceptor for the enzyme in this species is believed to be ubiquinone. Couples the redox reaction to proton translocation (for every two electrons transferred, four hydrogen ions are translocated across the cytoplasmic membrane), and thus conserves the redox energy in a proton gradient. This chain is NADH-quinone oxidoreductase subunit D, found in Mesorhizobium japonicum (strain LMG 29417 / CECT 9101 / MAFF 303099) (Mesorhizobium loti (strain MAFF 303099)).